A 795-amino-acid chain; its full sequence is Phenylalanine--tRNA ligase beta subunit (795 aa).

Residues 39-148 enclose the tRNA-binding domain; the sequence is AGSFNGVVVG…ADAPLGTDIR (110 aa). Residues 401–476 enclose the B5 domain; sequence PKRATITLRR…RVYGYNNIPD (76 aa). Residues Asp454, Asp460, Glu463, and Glu464 each coordinate Mg(2+). In terms of domain architecture, FDX-ACB spans 701 to 794; the sequence is SRFPANRRDI…LKERFQASLR (94 aa).

This sequence belongs to the phenylalanyl-tRNA synthetase beta subunit family. Type 1 subfamily. In terms of assembly, tetramer of two alpha and two beta subunits. Mg(2+) serves as cofactor.

It localises to the cytoplasm. The catalysed reaction is tRNA(Phe) + L-phenylalanine + ATP = L-phenylalanyl-tRNA(Phe) + AMP + diphosphate + H(+). This is Phenylalanine--tRNA ligase beta subunit from Salmonella choleraesuis (strain SC-B67).